Consider the following 506-residue polypeptide: Maturase K (506 aa).

The protein belongs to the intron maturase 2 family. MatK subfamily.

It localises to the plastid. It is found in the chloroplast. Its function is as follows. Usually encoded in the trnK tRNA gene intron. Probably assists in splicing its own and other chloroplast group II introns. The polypeptide is Maturase K (Austrosteenisia blackii (Blood vine)).